The primary structure comprises 378 residues: MIRVLSVFGTRPEAIKMAPLVKKLEEEQNVESLVCVTAQHRQMLDQVLEVFDIKPDFDLNIMKERQNLSDITVNALSGLYDLIGELKPDIVLVQGDTTTTFAGALAAFYHRIPVGHVEAGLRTNDRYSPFPEEINRRLTGVLSTLHFAPTKRNRENLLKENVMGKIYVTGNTVIDALRYTVKENHVFEDPILRNMDFSDGRYILLTSHRRENIGKPLENICRAVRRIVEGFEDVKVIYPVHMNPAVREIVFPMLENVERVFLIDPVNVIDMHNLMARSYLIMTDSGGIQEEAPALGKPVIVLRKETERPEAIEAGVAVLGGVEEERIFELAKKLLVDREEYEKMAKAVNPFGDGRASERIVKAILHEFGLSDPPEEFC.

The protein belongs to the UDP-N-acetylglucosamine 2-epimerase family.

Its subcellular location is the cytoplasm. The enzyme catalyses UDP-N-acetyl-alpha-D-glucosamine = UDP-N-acetyl-alpha-D-mannosamine. The polypeptide is Putative UDP-N-acetylglucosamine 2-epimerase (Thermotoga maritima (strain ATCC 43589 / DSM 3109 / JCM 10099 / NBRC 100826 / MSB8)).